A 216-amino-acid polypeptide reads, in one-letter code: Probable nicotinate-nucleotide adenylyltransferase (216 aa).

The protein belongs to the NadD family.

It carries out the reaction nicotinate beta-D-ribonucleotide + ATP + H(+) = deamido-NAD(+) + diphosphate. It functions in the pathway cofactor biosynthesis; NAD(+) biosynthesis; deamido-NAD(+) from nicotinate D-ribonucleotide: step 1/1. Its function is as follows. Catalyzes the reversible adenylation of nicotinate mononucleotide (NaMN) to nicotinic acid adenine dinucleotide (NaAD). This is Probable nicotinate-nucleotide adenylyltransferase from Shewanella baltica (strain OS185).